A 692-amino-acid chain; its full sequence is Zinc finger protein 180 (692 aa).

A KRAB domain is found at 72–145 (VNFKIVTVDF…GVKIERFTRD (74 aa)). Glycyl lysine isopeptide (Lys-Gly) (interchain with G-Cter in SUMO2) cross-links involve residues Lys138, Lys159, Lys168, Lys191, Lys198, Lys226, Lys304, Lys313, and Lys330. C2H2-type zinc fingers lie at residues 353 to 375 (FECN…QRTH), 381 to 403 (YECS…QRTH), 409 to 431 (YRCN…QRTH), 437 to 459 (YECN…QRTH), 465 to 487 (YECN…QRIH), 493 to 515 (YECN…QRTH), 521 to 543 (FECN…QRTH), 549 to 571 (YECS…QRIH), 577 to 599 (YECN…QRTH), 605 to 627 (YECS…QRTH), 633 to 655 (FECN…QRTH), and 661 to 683 (FTCI…QATH).

This sequence belongs to the krueppel C2H2-type zinc-finger protein family.

It is found in the nucleus. Functionally, may be involved in transcriptional regulation. This chain is Zinc finger protein 180 (ZNF180), found in Homo sapiens (Human).